We begin with the raw amino-acid sequence, 598 residues long: Kinesin-like protein klp-3 (598 aa).

Coiled-coil stretches lie at residues 19-66 and 89-118; these read EVEL…FIQG and GNLS…LETD. Positions 133–155 are disordered; it reads ALSRDSSCSVPRSVSPQPTGDVI. Positions 136-150 are enriched in polar residues; sequence RDSSCSVPRSVSPQP. Residues 170 to 248 are a coiled coil; the sequence is HWKKLQRCAE…LVELNGNIRV (79 aa). Residues 245 to 565 form the Kinesin motor domain; sequence NIRVFYRIRP…VNFAEKIGQV (321 aa). 328-335 contacts ATP; sequence GHTGSGKT. Residues 569–598 form a disordered region; the sequence is SGTMKREPTRRSMTGISSGQRREIPASPRK.

Belongs to the TRAFAC class myosin-kinesin ATPase superfamily. Kinesin family.

It is found in the cytoplasm. It localises to the cytoskeleton. The sequence is that of Kinesin-like protein klp-3 (klp-3) from Caenorhabditis elegans.